A 253-amino-acid polypeptide reads, in one-letter code: Proteasome subunit alpha (253 aa).

The segment at 229 to 253 (ADESQSYIDDIEDAADDSDDDDDEE) is disordered. Over residues 237-253 (DDIEDAADDSDDDDDEE) the composition is skewed to acidic residues.

The protein belongs to the peptidase T1A family. In terms of assembly, the 20S proteasome core is composed of 14 alpha and 14 beta subunits that assemble into four stacked heptameric rings, resulting in a barrel-shaped structure. The two inner rings, each composed of seven catalytic beta subunits, are sandwiched by two outer rings, each composed of seven alpha subunits. The catalytic chamber with the active sites is on the inside of the barrel. Has a gated structure, the ends of the cylinder being occluded by the N-termini of the alpha-subunits. Is capped at one or both ends by the proteasome regulatory ATPase, PAN.

It is found in the cytoplasm. The formation of the proteasomal ATPase PAN-20S proteasome complex, via the docking of the C-termini of PAN into the intersubunit pockets in the alpha-rings, triggers opening of the gate for substrate entry. Interconversion between the open-gate and close-gate conformations leads to a dynamic regulation of the 20S proteasome proteolysis activity. In terms of biological role, component of the proteasome core, a large protease complex with broad specificity involved in protein degradation. The protein is Proteasome subunit alpha of Halobacterium salinarum (strain ATCC 29341 / DSM 671 / R1).